The chain runs to 170 residues: MPNAAGRFGRLGWLWLSVLVLVIDQVSKLHFESSLSMYQQIVVIPDYFSWTLAYNTGAAFSFLADGSGWQRWLFALIAIAVSAVLVVWLKRLGRNETWLAIALALVLGGALGNLYDRIALGHVIDFILVHWQNRWYFPAFNFADSAITVGAVMLALDMFKSKKTGEAVHD.

4 consecutive transmembrane segments (helical) span residues 11-31 (LGWL…KLHF), 41-61 (IVVI…AAFS), 69-89 (WQRW…VVWL), and 95-115 (NETW…GNLY). Active-site residues include aspartate 125 and aspartate 144. A helical membrane pass occupies residues 136 to 156 (YFPAFNFADSAITVGAVMLAL).

It belongs to the peptidase A8 family.

It localises to the cell inner membrane. The enzyme catalyses Release of signal peptides from bacterial membrane prolipoproteins. Hydrolyzes -Xaa-Yaa-Zaa-|-(S,diacylglyceryl)Cys-, in which Xaa is hydrophobic (preferably Leu), and Yaa (Ala or Ser) and Zaa (Gly or Ala) have small, neutral side chains.. Its pathway is protein modification; lipoprotein biosynthesis (signal peptide cleavage). Functionally, this protein specifically catalyzes the removal of signal peptides from prolipoproteins. In Pseudomonas fluorescens (strain ATCC BAA-477 / NRRL B-23932 / Pf-5), this protein is Lipoprotein signal peptidase.